A 556-amino-acid chain; its full sequence is (-)-alpha-pinene synthase (556 aa).

The Mg(2+) site is built by aspartate 309, aspartate 313, aspartate 453, and glutamate 461. Positions 309–313 (DDMYD) match the DDXXD motif motif.

It belongs to the terpene synthase family. Tpsa subfamily. Mg(2+) serves as cofactor. Requires Mn(2+) as cofactor. In terms of tissue distribution, expressed in ripe fruits and roots. Not detected in vegetative tissues.

Its subcellular location is the cytoplasm. It localises to the cytosol. The enzyme catalyses (2E)-geranyl diphosphate = (1S,5S)-alpha-pinene + diphosphate. It functions in the pathway secondary metabolite biosynthesis; terpenoid biosynthesis. Monoterpene synthase catalyzing the production of (-)-alpha-pinene, beta-phellandrene and beta-myrcene as the major products. Unable to use farnesyl diphosphate as substrate. Exclusively expressed in the fruit of wild strawberries. Not detected in cultivated varieties. The protein is (-)-alpha-pinene synthase of Fragaria vesca (Woodland strawberry).